A 365-amino-acid polypeptide reads, in one-letter code: Chorismate synthase (365 aa).

Position 46 (Arg-46) interacts with NADP(+). Residues 124–126, Gly-284, 299–303, and Arg-326 contribute to the FMN site; these read RAS and KPTPS.

This sequence belongs to the chorismate synthase family. Requires FMNH2 as cofactor.

The enzyme catalyses 5-O-(1-carboxyvinyl)-3-phosphoshikimate = chorismate + phosphate. Its pathway is metabolic intermediate biosynthesis; chorismate biosynthesis; chorismate from D-erythrose 4-phosphate and phosphoenolpyruvate: step 7/7. In terms of biological role, catalyzes the anti-1,4-elimination of the C-3 phosphate and the C-6 proR hydrogen from 5-enolpyruvylshikimate-3-phosphate (EPSP) to yield chorismate, which is the branch point compound that serves as the starting substrate for the three terminal pathways of aromatic amino acid biosynthesis. This reaction introduces a second double bond into the aromatic ring system. In Pyrobaculum islandicum (strain DSM 4184 / JCM 9189 / GEO3), this protein is Chorismate synthase.